A 103-amino-acid chain; its full sequence is MYAVVKTGGKQYKVAAGEKLKVEQIPADIGAEITLDQVLAVGAGDQIKFGTPLVSGASVKATVISQGRHDKVKIFKMRRRKHYQKRQGHRQNYTELRIEAIVA.

The protein belongs to the bacterial ribosomal protein bL21 family. As to quaternary structure, part of the 50S ribosomal subunit. Contacts protein L20.

In terms of biological role, this protein binds to 23S rRNA in the presence of protein L20. This Cupriavidus necator (strain ATCC 17699 / DSM 428 / KCTC 22496 / NCIMB 10442 / H16 / Stanier 337) (Ralstonia eutropha) protein is Large ribosomal subunit protein bL21.